The following is a 224-amino-acid chain: Redox-sensing transcriptional repressor Rex (224 aa).

A DNA-binding region (H-T-H motif) is located at residues 17 to 56 (RYHRYLEELLKNDVKRISSRELSEKMGVTASQIRQDLNNF). 91–96 (GAGNLG) provides a ligand contact to NAD(+).

This sequence belongs to the transcriptional regulatory Rex family. As to quaternary structure, homodimer.

It localises to the cytoplasm. Its function is as follows. Modulates transcription in response to changes in cellular NADH/NAD(+) redox state. This is Redox-sensing transcriptional repressor Rex from Thermoanaerobacter sp. (strain X514).